Consider the following 406-residue polypeptide: Pyruvate dehydrogenase E1 component subunit beta-3, chloroplastic (406 aa).

Residues M1–K70 constitute a chloroplast transit peptide. E142 is a binding site for thiamine diphosphate. Residues V195, A243, I244, and N248 each contribute to the K(+) site.

In terms of assembly, tetramer of 2 alpha and 2 beta subunits. The cofactor is thiamine diphosphate.

Its subcellular location is the plastid. The protein resides in the chloroplast. The catalysed reaction is N(6)-[(R)-lipoyl]-L-lysyl-[protein] + pyruvate + H(+) = N(6)-[(R)-S(8)-acetyldihydrolipoyl]-L-lysyl-[protein] + CO2. Its function is as follows. The pyruvate dehydrogenase complex catalyzes the overall conversion of pyruvate to acetyl-CoA and CO(2). It contains multiple copies of three enzymatic components: pyruvate dehydrogenase (E1), dihydrolipoamide acetyltransferase (E2) and lipoamide dehydrogenase (E3). The chain is Pyruvate dehydrogenase E1 component subunit beta-3, chloroplastic (E1-BETA-2) from Arabidopsis thaliana (Mouse-ear cress).